The chain runs to 314 residues: Homoserine O-acetyltransferase (314 aa).

The Acyl-thioester intermediate role is filled by Cys-142. Substrate-binding residues include Lys-163 and Ser-192. Catalysis depends on His-235, which acts as the Proton acceptor. Glu-237 is a catalytic residue. A substrate-binding site is contributed by Arg-249.

The protein belongs to the MetA family.

Its subcellular location is the cytoplasm. It carries out the reaction L-homoserine + acetyl-CoA = O-acetyl-L-homoserine + CoA. It functions in the pathway amino-acid biosynthesis; L-methionine biosynthesis via de novo pathway; O-acetyl-L-homoserine from L-homoserine: step 1/1. In terms of biological role, transfers an acetyl group from acetyl-CoA to L-homoserine, forming acetyl-L-homoserine. The sequence is that of Homoserine O-acetyltransferase from Desulfovibrio desulfuricans (strain ATCC 27774 / DSM 6949 / MB).